A 624-amino-acid chain; its full sequence is Ceramide transfer protein (624 aa).

Positions 1-11 are enriched in polar residues; the sequence is MSDNQSWNSSG. Residues 1–24 form a disordered region; that stretch reads MSDNQSWNSSGSEEDPETESGPPV. The region spanning 23–117 is the PH domain; sequence PVERCGVLSK…WVDAIEQHKT (95 aa). Ser-126, Ser-132, and Ser-135 each carry phosphoserine. The tract at residues 202-221 is disordered; it reads DDEDDFPTTRSDGDFLHNTN. The stretch at 263-303 forms a coiled coil; the sequence is IELMVKREESWQKRHDREVEKRRRVEEAYKNVMEELKKKPR. Phosphoserine is present on Ser-315. The short motif at 321–327 is the FFAT element; it reads EFFDAVE. Residue Tyr-372 is modified to Phosphotyrosine. 3 positions are modified to phosphoserine: Ser-373, Ser-377, and Ser-380. One can recognise an START domain in the interval 389 to 618; that stretch reads DVHRFSSQVE…FTSYVQEKTA (230 aa). The an N-acylsphing-4-enine site is built by Glu-472, Gln-493, Asn-530, and Tyr-579.

Interacts with VAPA and VAPB. Interaction with VAPB is less efficient than with VAPA. Interacts (via FFAT motif) with MOSPD2 (via MSP domain). Phosphorylation on Ser-132 decreases the affinity toward phosphatidylinositol 4-phosphate at Golgi membranes and reduces ceramide transfer activity. Inactivated by hyperphosphorylation of serine residues by CSNK1G2/CK1 that triggers dissociation from the Golgi complex, thus down-regulating ER-to-Golgi transport of ceramide and sphingomyelin synthesis.

The protein resides in the cytoplasm. It is found in the golgi apparatus. The protein localises to the endoplasmic reticulum. The catalysed reaction is N-hexadecanoylsphing-4-enine(in) = N-hexadecanoylsphing-4-enine(out). Functionally, shelters ceramides and diacylglycerol lipids inside its START domain and mediates the intracellular trafficking of ceramides and diacylglycerol lipids in a non-vesicular manner. The sequence is that of Ceramide transfer protein (Cert1) from Mus musculus (Mouse).